Reading from the N-terminus, the 291-residue chain is 4-diphosphocytidyl-2-C-methyl-D-erythritol kinase (291 aa).

Lys14 is an active-site residue. Position 96-106 (96-106) interacts with ATP; that stretch reads PFGAGLGGGSS. The active site involves Asp138.

It belongs to the GHMP kinase family. IspE subfamily.

It catalyses the reaction 4-CDP-2-C-methyl-D-erythritol + ATP = 4-CDP-2-C-methyl-D-erythritol 2-phosphate + ADP + H(+). It functions in the pathway isoprenoid biosynthesis; isopentenyl diphosphate biosynthesis via DXP pathway; isopentenyl diphosphate from 1-deoxy-D-xylulose 5-phosphate: step 3/6. Catalyzes the phosphorylation of the position 2 hydroxy group of 4-diphosphocytidyl-2C-methyl-D-erythritol. This chain is 4-diphosphocytidyl-2-C-methyl-D-erythritol kinase, found in Chlorobium phaeovibrioides (strain DSM 265 / 1930) (Prosthecochloris vibrioformis (strain DSM 265)).